Consider the following 572-residue polypeptide: Phosphoenolpyruvate-protein phosphotransferase (572 aa).

The active-site Tele-phosphohistidine intermediate is the His-191. Phosphoenolpyruvate-binding residues include Arg-298 and Arg-334. Residues Glu-433 and Asp-457 each contribute to the Mg(2+) site. Phosphoenolpyruvate contacts are provided by residues 456 to 457 and Arg-467; that span reads ND. Cys-504 (proton donor) is an active-site residue.

The protein belongs to the PEP-utilizing enzyme family. In terms of assembly, homodimer. It depends on Mg(2+) as a cofactor.

It localises to the cytoplasm. It carries out the reaction L-histidyl-[protein] + phosphoenolpyruvate = N(pros)-phospho-L-histidyl-[protein] + pyruvate. Functionally, general (non sugar-specific) component of the phosphoenolpyruvate-dependent sugar phosphotransferase system (sugar PTS). This major carbohydrate active-transport system catalyzes the phosphorylation of incoming sugar substrates concomitantly with their translocation across the cell membrane. Enzyme I transfers the phosphoryl group from phosphoenolpyruvate (PEP) to the phosphoryl carrier protein (HPr). In Staphylococcus epidermidis (strain ATCC 35984 / DSM 28319 / BCRC 17069 / CCUG 31568 / BM 3577 / RP62A), this protein is Phosphoenolpyruvate-protein phosphotransferase (ptsI).